The chain runs to 394 residues: Phosphopentomutase (394 aa).

Mn(2+)-binding residues include Asp13, Asp286, His291, Asp327, His328, and His339.

It belongs to the phosphopentomutase family. Mn(2+) serves as cofactor.

It is found in the cytoplasm. It carries out the reaction 2-deoxy-alpha-D-ribose 1-phosphate = 2-deoxy-D-ribose 5-phosphate. The catalysed reaction is alpha-D-ribose 1-phosphate = D-ribose 5-phosphate. It functions in the pathway carbohydrate degradation; 2-deoxy-D-ribose 1-phosphate degradation; D-glyceraldehyde 3-phosphate and acetaldehyde from 2-deoxy-alpha-D-ribose 1-phosphate: step 1/2. Isomerase that catalyzes the conversion of deoxy-ribose 1-phosphate (dRib-1-P) and ribose 1-phosphate (Rib-1-P) to deoxy-ribose 5-phosphate (dRib-5-P) and ribose 5-phosphate (Rib-5-P), respectively. This chain is Phosphopentomutase, found in Bacillus thuringiensis (strain Al Hakam).